The primary structure comprises 418 residues: MNIFEELKARGLVFQTTDEQALVKALTEGQVSYYTGYDPTADSLHLGHLVAILTSRRLQLAGHKPYALVGGATGLIGDPSFKDAERSLQTKETVLEWSDKIKGQLSAFLDFENGDNKAELVNNYDWFSQISFIDFLRDVGKYFTVNYMMSKDSVKKRIETGISYTEFAYQIMQGYDFYELNDKHNVTLQIGGSDQWGNMTAGTELLRKKADKTGHVMTVPLITDSTGKKFGKSEGNAVWLDADKTSPYEMYQFWLNVMDDDAVRFLKIFTFLSLDEIAEIETQFNAARHERLAQKTLAREVVTLVHGEEAYKQALNITEQLFAGNIKNLSANELKQGLSNVPNYHVQSEDSLNLVDMLVTAGISPSKRQAREDVQNGAIYINGDRVQDLDYQLSNDDKIDDQLTVIRRGKKKYAVLTY.

Tyrosine 34 lines the L-tyrosine pocket. A 'HIGH' region motif is present at residues 39-48 (PTADSLHLGH). Residues tyrosine 169 and glutamine 173 each contribute to the L-tyrosine site. The 'KMSKS' region motif lies at 229 to 233 (KFGKS). Lysine 232 is a binding site for ATP. One can recognise an S4 RNA-binding domain in the interval 352 to 418 (LNLVDMLVTA…GKKKYAVLTY (67 aa)).

This sequence belongs to the class-I aminoacyl-tRNA synthetase family. TyrS type 1 subfamily. As to quaternary structure, homodimer.

It is found in the cytoplasm. The catalysed reaction is tRNA(Tyr) + L-tyrosine + ATP = L-tyrosyl-tRNA(Tyr) + AMP + diphosphate + H(+). In terms of biological role, catalyzes the attachment of tyrosine to tRNA(Tyr) in a two-step reaction: tyrosine is first activated by ATP to form Tyr-AMP and then transferred to the acceptor end of tRNA(Tyr). The sequence is that of Tyrosine--tRNA ligase from Streptococcus pyogenes serotype M6 (strain ATCC BAA-946 / MGAS10394).